The following is a 98-amino-acid chain: uncharacterized protein (98 aa).

The 55-residue stretch at 37–91 (LITSRQQLGISQKQLETLSGVKQPMIARIEKGQTNPQLETLLKLLAPLGKTLSIV) folds into the HTH cro/C1-type domain. The segment at residues 48–67 (QKQLETLSGVKQPMIARIEK) is a DNA-binding region (H-T-H motif).

This is an uncharacterized protein from Haemophilus influenzae (strain ATCC 51907 / DSM 11121 / KW20 / Rd).